The chain runs to 296 residues: Ribosomal RNA small subunit methyltransferase A (296 aa).

Residues 1 to 11 (MERSHVGRDCG) are compositionally biased toward basic and acidic residues. The segment at 1–24 (MERSHVGRDCGSRSSPRAFSVPTS) is disordered. Polar residues predominate over residues 12–24 (SRSSPRAFSVPTS). Asn-43, Leu-45, Gly-70, Glu-91, Asp-113, and Asn-135 together coordinate S-adenosyl-L-methionine.

The protein belongs to the class I-like SAM-binding methyltransferase superfamily. rRNA adenine N(6)-methyltransferase family. RsmA subfamily.

It localises to the cytoplasm. The enzyme catalyses adenosine(1518)/adenosine(1519) in 16S rRNA + 4 S-adenosyl-L-methionine = N(6)-dimethyladenosine(1518)/N(6)-dimethyladenosine(1519) in 16S rRNA + 4 S-adenosyl-L-homocysteine + 4 H(+). Functionally, specifically dimethylates two adjacent adenosines (A1518 and A1519) in the loop of a conserved hairpin near the 3'-end of 16S rRNA in the 30S particle. May play a critical role in biogenesis of 30S subunits. The polypeptide is Ribosomal RNA small subunit methyltransferase A (Salinibacter ruber (strain DSM 13855 / M31)).